Here is a 112-residue protein sequence, read N- to C-terminus: MVKGRQGERVRLYVRGTILGYKRSKSNQYPNTSLVQVEGVNTTEEVSWYKGKRMAYIYKAKTKKNGSHYRCIWGKVTRPHGNSGVVRAKFTSNLPPKSMGSRVRVFMYPSNI.

The protein belongs to the eukaryotic ribosomal protein eL33 family.

The polypeptide is Large ribosomal subunit protein eL33w (RPL35AA) (Arabidopsis thaliana (Mouse-ear cress)).